The primary structure comprises 70 residues: Protein FlmC (70 aa).

Functionally, component of a type I toxin-antitoxin (TA) system. Either this protein or sequences upstream of it are required for translation of downstream flmA; this could be translationally coupled to flmA. The chain is Protein FlmC (flmC) from Escherichia coli (strain K12).